The sequence spans 688 residues: Coiled-coil domain-containing protein 157 (688 aa).

The span at A143–P153 shows a compositional bias: polar residues. Disordered stretches follow at residues A143–S162, A168–S189, Q322–R341, Q366–A385, and Q592–T688. Residues K288–Q572 are a coiled coil. Positions E369–Q382 are enriched in polar residues. Over residues S671–A680 the composition is skewed to low complexity.

This chain is Coiled-coil domain-containing protein 157 (CCDC157), found in Bos taurus (Bovine).